The chain runs to 209 residues: MAIHVITHPLVQHKLGLMRSHGISTKSFRELCSEVGTLLTYEATQNLPLEDNEITSWDGTKLNVQHIKGKKITVVPILRAGLGMMDGVMQLLPAAKVSVVGLERNEETLEPIPYFEKLVSNINERLSLVIDPMLATGGTMIATIDMLKKAGCKEIKVIVLVAAPEGVEKTLAAHPDVEIYTASVDSHLNDKGYIVPGLGDAGDKIFGTV.

5-phospho-alpha-D-ribose 1-diphosphate-binding positions include Arg79, Arg104, and 131–139 (DPMLATGGT). Uracil-binding positions include Ile194 and 199 to 201 (GDA). Asp200 is a 5-phospho-alpha-D-ribose 1-diphosphate binding site.

It belongs to the UPRTase family. It depends on Mg(2+) as a cofactor.

The enzyme catalyses UMP + diphosphate = 5-phospho-alpha-D-ribose 1-diphosphate + uracil. The protein operates within pyrimidine metabolism; UMP biosynthesis via salvage pathway; UMP from uracil: step 1/1. Allosterically activated by GTP. Catalyzes the conversion of uracil and 5-phospho-alpha-D-ribose 1-diphosphate (PRPP) to UMP and diphosphate. The protein is Uracil phosphoribosyltransferase of Pseudoalteromonas translucida (strain TAC 125).